A 301-amino-acid chain; its full sequence is Polyamine aminopropyltransferase (301 aa).

The 237-residue stretch at 4 to 240 folds into the PABS domain; that stretch reads WHWLLEWQTP…GLWGFVYGGV (237 aa). Gln33 contacts S-methyl-5'-thioadenosine. Residues His64 and Glu89 each contribute to the spermidine site. Residues Asp109 and 141 to 142 contribute to the S-methyl-5'-thioadenosine site; that span reads DG. Asp159 (proton acceptor) is an active-site residue.

It belongs to the spermidine/spermine synthase family. In terms of assembly, homotrimer.

The protein localises to the cytoplasm. It catalyses the reaction S-adenosyl 3-(methylsulfanyl)propylamine + putrescine = S-methyl-5'-thioadenosine + spermidine + H(+). It carries out the reaction S-adenosyl 3-(methylsulfanyl)propylamine + propane-1,3-diamine = norspermidine + S-methyl-5'-thioadenosine + H(+). The catalysed reaction is norspermidine + S-adenosyl 3-(methylsulfanyl)propylamine = norspermine + S-methyl-5'-thioadenosine + H(+). The enzyme catalyses S-adenosyl 3-(methylsulfanyl)propylamine + spermidine = thermospermine + S-methyl-5'-thioadenosine + H(+). The protein operates within amine and polyamine biosynthesis; spermidine biosynthesis; spermidine from putrescine: step 1/1. Competitively inhibited by 5-methylthioadenosine, 5-methylthiotubercidin, S-adenosyl(5)-3-thiopropylamine and S-adenosyl-3-thio-l,8-diaminooctane. Involved in the biosynthesis of polyamines which are thought to support the growth of thermophilic microorganisms under high-temperature conditions. It seems that long-chain and branched-chain of polyamines effectively stabilize DNA and RNA, respectively. Catalyzes the irreversible transfer of a propylamine group from the amino donor S-adenosylmethioninamine (decarboxy-AdoMet) to various amine acceptors such as putrescine (1,4-diaminobutane), 1,3-diaminopropane, sym-norspermidine and spermidine. The biosynthesis of caldopentamine from norspermine has been also observed, but with a very low activity. The reaction involves a nucleophilic attack on the C-3 methylene of the propylamine moiety adjacent to the positively charged sulfur of decarboxy-AdoMet. S-adenosylmethioninamine is the only amino donor. The protein is Polyamine aminopropyltransferase of Saccharolobus solfataricus (strain ATCC 35092 / DSM 1617 / JCM 11322 / P2) (Sulfolobus solfataricus).